A 498-amino-acid polypeptide reads, in one-letter code: Sugar transport protein 2 (498 aa).

At 1-22 (MAVGSMNVEEGTKAFPAKLTGQ) the chain is on the cytoplasmic side. Helical transmembrane passes span 23–43 (VFLC…DIGI), 80–100 (LLQL…FISS), 117–137 (IFFL…MLIG), 140–160 (ILLG…ISEI), 167–187 (GGLN…ASYV), 200–220 (YSLG…FFIH), 288–308 (LQFF…PVLF), 320–340 (ISTV…LLVV), 348–368 (LLME…GILL), 381–401 (AVPL…AWSW), 421–441 (GYFC…QFFL), and 450–470 (LLFF…VFFL). Topologically, residues 471-498 (PETKGVPIEEMAEKRWKTHPRWKKYFKD) are cytoplasmic.

It belongs to the major facilitator superfamily. Sugar transporter (TC 2.A.1.1) family. As to expression, pollen specific (at protein level).

It localises to the membrane. Mediates an active uptake of hexoses, probably by sugar/hydrogen symport. Can transport glucose, 3-O-methylglucose, xylose, mannose, fructose and galactose. In Arabidopsis thaliana (Mouse-ear cress), this protein is Sugar transport protein 2 (STP2).